A 417-amino-acid polypeptide reads, in one-letter code: Hyaluronidase-3 (417 aa).

Residues 1 to 20 (MTTQLGPALVLGVALCLGCG) form the signal peptide. 5 disulfides stabilise this stretch: C42–C331, C205–C220, C356–C367, C361–C395, and C397–C406. The N-linked (GlcNAc...) asparagine glycan is linked to N69. The Proton donor role is filled by E129. Residue N215 is glycosylated (N-linked (GlcNAc...) asparagine). In terms of domain architecture, EGF-like spans 352–407 (AAMACSHQRCHGHGRCARRDPGQMEAFLHLWPDGSLGDWKSFSCHCYWGWAGPTCQ).

It belongs to the glycosyl hydrolase 56 family. Post-translationally, N-glycosylated. As to expression, expressed in sperm. Highly expressed in epidermis of the skin, where it is expressed intracellularily in the deep horny layer (at protein level). Bone marrow, testis and kidney.

It is found in the secreted. Its subcellular location is the cell membrane. The protein resides in the cytoplasmic vesicle. The protein localises to the secretory vesicle. It localises to the acrosome. It is found in the endoplasmic reticulum. Its subcellular location is the early endosome. The enzyme catalyses Random hydrolysis of (1-&gt;4)-linkages between N-acetyl-beta-D-glucosamine and D-glucuronate residues in hyaluronate.. Facilitates sperm penetration into the layer of cumulus cells surrounding the egg by digesting hyaluronic acid. Involved in induction of the acrosome reaction in the sperm. Involved in follicular atresia, the breakdown of immature ovarian follicles that are not selected to ovulate. Induces ovarian granulosa cell apoptosis, possibly via apoptotic signaling pathway involving CASP8 and CASP3 activation, and poly(ADP-ribose) polymerase (PARP) cleavage. Has no hyaluronidase activity in embryonic fibroblasts in vitro. Has no hyaluronidase activity in granulosa cells in vitro. This is Hyaluronidase-3 (HYAL3) from Homo sapiens (Human).